Consider the following 218-residue polypeptide: MDKSESTSAGRNRRRRPRRGSRSAPSSADANFRVLSQQLSRLNKTLAAGRPTINHPTFVGSERCRPGYTFTSITLKPPKIDRGSYYGKRLLLPDSVTEYDKKLVSRIQIRVNPLPKFDSTVWVTVRKVPASSDLSVAAISAMFADGASPVLVYQYAASGVQANNKLLYDLSAMRADIGDMRKYAVLVYSKDDALETDELVLHVDIEHQRIPTSGVLPV.

Positions 1 to 28 (MDKSESTSAGRNRRRRPRRGSRSAPSSA) are disordered. The segment covering 11 to 21 (RNRRRRPRRGS) has biased composition (basic residues).

This sequence belongs to the cucumovirus capsid protein family.

It is found in the virion. Capsid protein. Probably binds RNA and plays a role in packaging. This chain is Capsid protein, found in Cucurbita pepo (Vegetable marrow).